Consider the following 404-residue polypeptide: Argininosuccinate synthase (404 aa).

ATP is bound at residue 9-17 (AYSGGLDTS). Residue Y86 coordinates L-citrulline. G116 is an ATP binding site. L-aspartate-binding residues include T118, N122, and D123. Residue N122 coordinates L-citrulline. Positions 126, 174, 183, 259, and 271 each coordinate L-citrulline.

Belongs to the argininosuccinate synthase family. Type 1 subfamily. In terms of assembly, homotetramer.

The protein resides in the cytoplasm. The catalysed reaction is L-citrulline + L-aspartate + ATP = 2-(N(omega)-L-arginino)succinate + AMP + diphosphate + H(+). It participates in amino-acid biosynthesis; L-arginine biosynthesis; L-arginine from L-ornithine and carbamoyl phosphate: step 2/3. In Listeria welshimeri serovar 6b (strain ATCC 35897 / DSM 20650 / CCUG 15529 / CIP 8149 / NCTC 11857 / SLCC 5334 / V8), this protein is Argininosuccinate synthase.